A 501-amino-acid polypeptide reads, in one-letter code: MNHAGMLALVKKRKRPVEAGAQGQVEVKFKEVTLELVERKMGSSRRNFLTRLARSKGFRVEDVLSDDVTHVVAEDNQAEVLWAWLMGHGLRDVSRLALLDISWFTDSMREGRPVRVETRHSIQNTPTGTDCSPPTAVANVSQYACQRRTTTENHNNKIFTDVMEELAESSEFNESKGPCLAFRQAASVLKSLPSAVHCLKAIQGLPCLGEHTKAVMEEILTFGRSFKVEEIRCDERYQALKLFTSVFGVGPKTAEKWYRRGLRSLQEILTEPNIQLNRMQRAGFLYYSDISKAVSKAEAKAVGCIIEDTFHWIAPDAILALTGGFRRGKEYGHDVDFLLTMPEIGKDEGLLLHVIDRLKDQGILLYCDYQGSTFDVSKLPSCRFEDMDCFQKCFLILRLEQGQVEGERGLQRDPGDSRGWRAVRVDLVAPPVDRYAFALLGWTGSRFGRDLRTFAQKERQMLLDNHALYDKTKKLCLLATTEEDIFTHLGLEYVEPWQRNA.

Residues 11–17 (KKRKRPV) carry the Nuclear localization signal motif. A BRCT domain is found at 24–121 (QVEVKFKEVT…RPVRVETRHS (98 aa)). The involved in DNA binding stretch occupies residues 249–253 (VGPKT). Residues 324 to 329 (GFRRGK) and 333 to 336 (HDVD) each bind a 2'-deoxyribonucleoside 5'-triphosphate. Residues Asp334, Asp336, and Asp426 each contribute to the Mg(2+) site. Position 441 to 442 (441 to 442 (GW)) interacts with a 2'-deoxyribonucleoside 5'-triphosphate.

This sequence belongs to the DNA polymerase type-X family. Mg(2+) is required as a cofactor.

It is found in the nucleus. The enzyme catalyses DNA(n) + a 2'-deoxyribonucleoside 5'-triphosphate = DNA(n+1) + diphosphate. Template-independent DNA polymerase which catalyzes the random addition of deoxynucleoside 5'-triphosphate to the 3'-end of a DNA initiator. One of the in vivo functions of this enzyme is the addition of nucleotides at the junction (N region) of rearranged Ig heavy chain and T-cell receptor gene segments during the maturation of B- and T-cells. The polypeptide is DNA nucleotidylexotransferase (dntt) (Oncorhynchus mykiss (Rainbow trout)).